The following is a 990-amino-acid chain: MLRFQRTVPRVAIRRLANVYSEGAVLHGYKVRRAQEIPEMRMAAVELEHEMTGARHLHLEREDQNNVFSVGFRTPPPDATGVPHILEHTTLCGSQKYPVRDPFFKMLNRSLANFMNAMTAHDHTFYPFATTNQKDFANLRDLYLDATLRPLLRHADFLQEGWRLEHRDVGDASSELVFKGVVYNEMKGQVSNADYYFWIRFQEAIYPALHNSGGDPEHITDLSYEDLVAFHQNHYHPSNAKTFTYGNFPLRDTLRKLDDEFRGFGRRAIPQMHEKPLQLREAVSVEEPCQIDPMLPADKQCRTSMTWICGNPNDVYETFLLKILGSLLFDGHSSAFYKKLVEETGLAYELSVNTGVESQTAANFLTVGVQGCTDVGQVHKVIMETFTALLAQPFEKHRVEAILHQLELSKKDQKSDFGLQLLYGILPGWVNNTDPFDLLSLNSALQRFRADWDREGDGLFQRLLNKYVIGKPSFTFTMVGSSDFNQVKDQNEQSKLKAKVSSLTESDKEVIYKRGLHLQELQNSEQDLSKLPTLTTADIPHSSGHYFVSRDGPITTRQTDTNGITYIRMKRPLKGAIPYDAYPYIPLYSDGLMNIGTLLEDASAIEEQIRLHTGGISVSIGVHPNVETRLSELYLEISACALNSKTQYVFDIINKIMNETALSVRSEKMKVLIRAAASSFTSYAAENGHDLARLHTGAHFSQTQAIMEQTAGIEQVRHMNNLMSIIEKEAEFNTVLQNLEAMHRKIFVADGLEVMITTDNRQTSDVVKDQALKFIAGVQQSAGAESWLPEKYSRRALEKPYPALLQFPFQVHYTAQSTQGVSYTHPDGAHLQVLASLLTFKHLHREVREKGGAYGGGATYNATDGIFNFFSYRDPQPVRSLNIFRNAGKYVLNEARWTADDLNEAKLSIFQRVDAPISPSSEGLLQFRHNISDEQRDRRRQQLLKSTLDDVRRVADIYLVQPSPSQHMSAVVGPELPREVWSSQWPVIKV.

A mitochondrion-targeting transit peptide spans 1–56; the sequence is MLRFQRTVPRVAIRRLANVYSEGAVLHGYKVRRAQEIPEMRMAAVELEHEMTGARH. Residue H84 participates in Zn(2+) binding. E87 functions as the Proton acceptor in the catalytic mechanism. H88 serves as a coordination point for Zn(2+). Residue E160 is part of the active site. E185 provides a ligand contact to Zn(2+).

Belongs to the peptidase M16 family. PreP subfamily. In terms of assembly, monomer and homodimer; homodimerization is induced by binding of the substrate. The cofactor is Zn(2+).

The protein resides in the mitochondrion intermembrane space. The protein localises to the mitochondrion matrix. Its function is as follows. Degrades mitochondrial transit peptides after their cleavage in the intermembrane space or in the matrix, and presequence peptides; clearance of these peptides is required to keep the presequence processing machinery running. Preferentially cleaves the N-terminal side of paired basic amino acid residues. Also degrades other unstructured peptides. May function as an ATP-dependent peptidase as opposed to a metalloendopeptidase. The sequence is that of Presequence protease, mitochondrial (CYM1) from Eremothecium gossypii (strain ATCC 10895 / CBS 109.51 / FGSC 9923 / NRRL Y-1056) (Yeast).